Consider the following 323-residue polypeptide: Methenyltetrahydromethanopterin cyclohydrolase (323 aa).

The protein belongs to the MCH family.

The protein resides in the cytoplasm. The catalysed reaction is 5,10-methenyl-5,6,7,8-tetrahydromethanopterin + H2O = N(5)-formyl-5,6,7,8-tetrahydromethanopterin + H(+). The protein operates within one-carbon metabolism; methanogenesis from CO(2); 5,10-methenyl-5,6,7,8-tetrahydromethanopterin from CO(2): step 3/3. Catalyzes the reversible interconversion of 5-formyl-H(4)MPT to methenyl-H(4)MPT(+). The polypeptide is Methenyltetrahydromethanopterin cyclohydrolase (Methanococcus vannielii (strain ATCC 35089 / DSM 1224 / JCM 13029 / OCM 148 / SB)).